The primary structure comprises 251 residues: Fibroblast growth factor 23 (251 aa).

The N-terminal stretch at 1–24 is a signal peptide; it reads MLGTCLRLLVGVLCTVCSLGTARA. A disulfide bond links Cys-95 and Cys-113. Thr-171 and Thr-178 each carry an O-linked (GalNAc) threonine glycan. The tract at residues 175–251 is disordered; the sequence is RRHTRSAEDP…DRCRPFPRFV (77 aa). Residues 179 to 189 are compositionally biased toward basic and acidic residues; the sequence is RSAEDPPERDP. Residue Ser-180 is modified to Phosphoserine; by FAM20C.

This sequence belongs to the heparin-binding growth factors family. As to quaternary structure, interacts with FGFR1. Interacts with FGFR2, FGFR3 and FGFR4. Affinity between fibroblast growth factors (FGFs) and their receptors is increased by KL and heparan sulfate glycosaminoglycans that function as coreceptors. In terms of processing, following secretion this protein is inactivated by cleavage into a N-terminal fragment and a C-terminal fragment. The processing is effected by proprotein convertases. Post-translationally, O-glycosylated at Thr-171 and Thr-178 by GALNT3 and glycosylation of Thr-178 requires previous glycosylation at Thr171. Glycosylation is necessary for secretion; it blocks processing by proprotein convertases when the O-glycan is alpha 2,6-sialylated. Competition between proprotein convertase cleavage and block of cleavage by O-glycosylation determines the level of secreted active FGF23. Phosphorylation at Ser-180 mediated by FAM20C slows down glycosylation at Thr-178 notably. Mainly expressed in the brain and thymus at low levels. In brain; preferentially expressed in the ventrolateral thalamic nucleus.

The protein localises to the secreted. In terms of biological role, regulator of phosphate homeostasis. Inhibits renal tubular phosphate transport by reducing SLC34A1 levels. Acts directly on the parathyroid to decrease PTH secretion. Regulator of vitamin-D metabolism. Negatively regulates osteoblasts differentiation and matrix mineralization. Up-regulates EGR1 expression in the presence of KL. The chain is Fibroblast growth factor 23 (Fgf23) from Mus musculus (Mouse).